The primary structure comprises 105 residues: Heat shock protein HspQ (105 aa).

The interval 76-105 (EMRDEHPEQPSMDELARTIRKQLQAPRLRN) is disordered.

This sequence belongs to the HspQ family.

The protein localises to the cytoplasm. Its function is as follows. Involved in the degradation of certain denaturated proteins, including DnaA, during heat shock stress. The protein is Heat shock protein HspQ of Salmonella agona (strain SL483).